The sequence spans 278 residues: MTRVIVISNLRLAQAFVDYMATHHVALEIRPDAQGVEIWLADDEQLSAVQHELEQFLLDPLNPRYQAASWQAGNVNSNLPYQRFSYLQTLRSQAGPLTLSVMVLCIAIYILMLITGDMAVMSWLAWPYNSSQYLQIWRWVSHAFLHFSLLHILFNLMWWWYLGGQMEKRLGTSKLLVLTIVSAVFSGWGQSLFSGANFGGLSGVVYALMGYVWLTGERAPEHGISLPRGLMAFSVLWLIAGYFDILGLSIANAAHVSGLIIGLLMAFWDTRNSARTVQ.

6 consecutive transmembrane segments (helical) span residues 94-114 (AGPLTLSVMVLCIAIYILMLI), 143-163 (AFLHFSLLHILFNLMWWWYLG), 175-195 (LLVLTIVSAVFSGWGQSLFSG), 196-216 (ANFGGLSGVVYALMGYVWLTG), 224-241 (ISLPRGLMAFSVLWLIAG), and 245-267 (ILGLSIANAAHVSGLIIGLLMAF). The Nucleophile role is filled by Ser202. The active site involves His255.

Belongs to the peptidase S54 family.

The protein resides in the cell inner membrane. The catalysed reaction is Cleaves type-1 transmembrane domains using a catalytic dyad composed of serine and histidine that are contributed by different transmembrane domains.. Its function is as follows. Rhomboid-type serine protease that catalyzes intramembrane proteolysis. This is Rhomboid protease GlpG from Yersinia pseudotuberculosis serotype I (strain IP32953).